Here is a 252-residue protein sequence, read N- to C-terminus: Phosphate import ATP-binding protein PstB (252 aa).

The 243-residue stretch at 5 to 247 (VKIDKLNVHF…PEKKQTEDYI (243 aa)) folds into the ABC transporter domain. 37–44 (GPSGCGKS) lines the ATP pocket.

It belongs to the ABC transporter superfamily. Phosphate importer (TC 3.A.1.7) family. The complex is composed of two ATP-binding proteins (PstB), two transmembrane proteins (PstC and PstA) and a solute-binding protein (PstS).

It localises to the cell inner membrane. The enzyme catalyses phosphate(out) + ATP + H2O = ADP + 2 phosphate(in) + H(+). In terms of biological role, part of the ABC transporter complex PstSACB involved in phosphate import. Responsible for energy coupling to the transport system. This is Phosphate import ATP-binding protein PstB from Geobacter metallireducens (strain ATCC 53774 / DSM 7210 / GS-15).